The chain runs to 258 residues: Imidazole glycerol phosphate synthase subunit HisF (258 aa).

Residues aspartate 11 and aspartate 130 contribute to the active site.

This sequence belongs to the HisA/HisF family. As to quaternary structure, heterodimer of HisH and HisF.

The protein localises to the cytoplasm. It catalyses the reaction 5-[(5-phospho-1-deoxy-D-ribulos-1-ylimino)methylamino]-1-(5-phospho-beta-D-ribosyl)imidazole-4-carboxamide + L-glutamine = D-erythro-1-(imidazol-4-yl)glycerol 3-phosphate + 5-amino-1-(5-phospho-beta-D-ribosyl)imidazole-4-carboxamide + L-glutamate + H(+). The protein operates within amino-acid biosynthesis; L-histidine biosynthesis; L-histidine from 5-phospho-alpha-D-ribose 1-diphosphate: step 5/9. IGPS catalyzes the conversion of PRFAR and glutamine to IGP, AICAR and glutamate. The HisF subunit catalyzes the cyclization activity that produces IGP and AICAR from PRFAR using the ammonia provided by the HisH subunit. The polypeptide is Imidazole glycerol phosphate synthase subunit HisF (Methylorubrum extorquens (strain PA1) (Methylobacterium extorquens)).